The primary structure comprises 88 residues: Beta-insect excitatory toxin LqhIT1a (88 aa).

The signal sequence occupies residues 1-18 (MKFFLLFLVVLPIMGVLG). An LCN-type CS-alpha/beta domain is found at 20–83 (KNGYAVDSKG…ISGTTKKYCD (64 aa)). Cystine bridges form between Cys34–Cys55, Cys40–Cys60, Cys44–Cys62, and Cys56–Cys82.

It belongs to the long (4 C-C) scorpion toxin superfamily. Sodium channel inhibitor family. Beta subfamily. In terms of tissue distribution, expressed by the venom gland.

It localises to the secreted. Functionally, excitatory insect toxins induce a spastic paralysis. They bind voltage-independently at site-4 of sodium channels (Nav) and shift the voltage of activation toward more negative potentials thereby affecting sodium channel activation and promoting spontaneous and repetitive firing. The polypeptide is Beta-insect excitatory toxin LqhIT1a (Leiurus hebraeus (Hebrew deathstalker scorpion)).